The primary structure comprises 360 residues: uncharacterized protein (360 aa).

3 Solcar repeats span residues 34 to 153, 172 to 256, and 266 to 355; these read VGVL…LSVW, PDWS…FKTN, and NPFV…FKFL. The next 6 helical transmembrane spans lie at 40–60, 125–145, 178–198, 225–247, 269–289, and 327–348; these read VSASSSGAIVTSLFMTPLDVV, LWSGLSPTMVMALPATVFYFT, AVAGIVARTIAVTVVSPIEMI, ISSFYLGWTPTMLRDIPFSGIYW, VVSFVSGAAAGVVASIFTHPF, and FSSGLVPRLVKVSPSCAIMISF.

Belongs to the mitochondrial carrier (TC 2.A.29) family.

It localises to the mitochondrion inner membrane. This is an uncharacterized protein from Caenorhabditis elegans.